The primary structure comprises 322 residues: DNA primase small subunit PriS (322 aa).

Active-site residues include Asp-86, Asp-88, and Asp-226.

This sequence belongs to the eukaryotic-type primase small subunit family. Heterodimer of a small subunit (PriS) and a large subunit (PriL). The cofactor is Mg(2+). Mn(2+) is required as a cofactor.

In terms of biological role, catalytic subunit of DNA primase, an RNA polymerase that catalyzes the synthesis of short RNA molecules used as primers for DNA polymerase during DNA replication. The small subunit contains the primase catalytic core and has DNA synthesis activity on its own. Binding to the large subunit stabilizes and modulates the activity, increasing the rate of DNA synthesis while decreasing the length of the DNA fragments, and conferring RNA synthesis capability. The DNA polymerase activity may enable DNA primase to also catalyze primer extension after primer synthesis. May also play a role in DNA repair. This Thermoplasma acidophilum (strain ATCC 25905 / DSM 1728 / JCM 9062 / NBRC 15155 / AMRC-C165) protein is DNA primase small subunit PriS.